The chain runs to 649 residues: tRNA-guanine(15) transglycosylase (649 aa).

Catalysis depends on Asp88, which acts as the Nucleophile. Substrate contacts are provided by Asp123 and Ala194. 3 residues coordinate Zn(2+): Cys280, Cys282, and Cys285. The 76-residue stretch at 572-647 (KYRVIVDKSV…VAVNIRGGLK (76 aa)) folds into the PUA domain.

It belongs to the archaeosine tRNA-ribosyltransferase family. It depends on Zn(2+) as a cofactor.

The catalysed reaction is guanosine(15) in tRNA + 7-cyano-7-deazaguanine = 7-cyano-7-carbaguanosine(15) in tRNA + guanine. It participates in tRNA modification; archaeosine-tRNA biosynthesis. Functionally, exchanges the guanine residue with 7-cyano-7-deazaguanine (preQ0) at position 15 in the dihydrouridine loop (D-loop) of archaeal tRNAs. In Methanococcus vannielii (strain ATCC 35089 / DSM 1224 / JCM 13029 / OCM 148 / SB), this protein is tRNA-guanine(15) transglycosylase.